The primary structure comprises 291 residues: 4,5:9,10-diseco-3-hydroxy-5,9,17-trioxoandrosta-1(10),2-diene-4-oate hydrolase (291 aa).

Residues 45–46, Asn-54, Asn-113, Leu-115, and Arg-192 contribute to the substrate site; that span reads GG. Catalysis depends on His-269, which acts as the Proton acceptor. Trp-270 is a binding site for substrate.

The protein belongs to the AB hydrolase superfamily. HsaD family. As to quaternary structure, homodimer.

The catalysed reaction is (1E,2Z)-3-hydroxy-5,9,17-trioxo-4,5:9,10-disecoandrosta-1(10),2-dien-4-oate + H2O = 3-[(3aS,4S,7aS)-7a-methyl-1,5-dioxo-octahydro-1H-inden-4-yl]propanoate + (2Z,4Z)-2-hydroxyhexa-2,4-dienoate + H(+). The enzyme catalyses 2,6-dioxo-6-phenylhexa-3-enoate + H2O = 2-oxopent-4-enoate + benzoate + H(+). It functions in the pathway lipid metabolism; steroid biosynthesis. In terms of biological role, catalyzes the hydrolysis of a carbon-carbon bond in 4,5: 9,10-diseco-3-hydroxy-5,9,17-trioxoandrosta-1(10),2-diene-4-oate (4,9-DSHA) to yield 9,17-dioxo-1,2,3,4,10,19-hexanorandrostan-5-oate (DOHNAA) and 2-hydroxy-hexa-2,4-dienoate (HHD). Is also able to catalyze the hydrolysis of 2-hydroxy-6-oxo-6-phenylhexa-2,4-dienoic acid (HOPDA) and the synthetic analog 8-(2-chlorophenyl)-2-hydroxy-5-methyl-6-oxoocta-2,4-dienoic acid (HOPODA). This chain is 4,5:9,10-diseco-3-hydroxy-5,9,17-trioxoandrosta-1(10),2-diene-4-oate hydrolase (hsaD), found in Mycobacterium tuberculosis (strain ATCC 25618 / H37Rv).